The following is a 561-amino-acid chain: 2-succinyl-5-enolpyruvyl-6-hydroxy-3-cyclohexene-1-carboxylate synthase (561 aa).

Belongs to the TPP enzyme family. MenD subfamily. As to quaternary structure, homodimer. Mg(2+) is required as a cofactor. Requires Mn(2+) as cofactor. Thiamine diphosphate serves as cofactor.

It carries out the reaction isochorismate + 2-oxoglutarate + H(+) = 5-enolpyruvoyl-6-hydroxy-2-succinyl-cyclohex-3-ene-1-carboxylate + CO2. It functions in the pathway quinol/quinone metabolism; 1,4-dihydroxy-2-naphthoate biosynthesis; 1,4-dihydroxy-2-naphthoate from chorismate: step 2/7. It participates in quinol/quinone metabolism; menaquinone biosynthesis. In terms of biological role, catalyzes the thiamine diphosphate-dependent decarboxylation of 2-oxoglutarate and the subsequent addition of the resulting succinic semialdehyde-thiamine pyrophosphate anion to isochorismate to yield 2-succinyl-5-enolpyruvyl-6-hydroxy-3-cyclohexene-1-carboxylate (SEPHCHC). The protein is 2-succinyl-5-enolpyruvyl-6-hydroxy-3-cyclohexene-1-carboxylate synthase of Proteus mirabilis (strain HI4320).